Consider the following 704-residue polypeptide: Elongation factor G (704 aa).

Residues 8–291 form the tr-type G domain; that stretch reads DKVRNIGIMA…AVVDYLASPL (284 aa). GTP-binding positions include 17–24, 90–94, and 144–147; these read AHIDAGKT, DTPGH, and NKMD.

It belongs to the TRAFAC class translation factor GTPase superfamily. Classic translation factor GTPase family. EF-G/EF-2 subfamily.

It is found in the cytoplasm. Functionally, catalyzes the GTP-dependent ribosomal translocation step during translation elongation. During this step, the ribosome changes from the pre-translocational (PRE) to the post-translocational (POST) state as the newly formed A-site-bound peptidyl-tRNA and P-site-bound deacylated tRNA move to the P and E sites, respectively. Catalyzes the coordinated movement of the two tRNA molecules, the mRNA and conformational changes in the ribosome. In Chlorobium phaeovibrioides (strain DSM 265 / 1930) (Prosthecochloris vibrioformis (strain DSM 265)), this protein is Elongation factor G.